Here is a 130-residue protein sequence, read N- to C-terminus: Large ribosomal subunit protein eL32 (130 aa).

This sequence belongs to the eukaryotic ribosomal protein eL32 family. As to quaternary structure, part of the 50S ribosomal subunit.

This is Large ribosomal subunit protein eL32 from Pyrococcus furiosus (strain ATCC 43587 / DSM 3638 / JCM 8422 / Vc1).